Reading from the N-terminus, the 363-residue chain is tRNA/tmRNA (uracil-C(5))-methyltransferase (363 aa).

Glutamine 187, tyrosine 215, asparagine 220, glutamate 236, and aspartate 296 together coordinate S-adenosyl-L-methionine. Cysteine 321 (nucleophile) is an active-site residue. The active-site Proton acceptor is the glutamate 355.

Belongs to the class I-like SAM-binding methyltransferase superfamily. RNA M5U methyltransferase family. TrmA subfamily.

It carries out the reaction uridine(54) in tRNA + S-adenosyl-L-methionine = 5-methyluridine(54) in tRNA + S-adenosyl-L-homocysteine + H(+). The enzyme catalyses uridine(341) in tmRNA + S-adenosyl-L-methionine = 5-methyluridine(341) in tmRNA + S-adenosyl-L-homocysteine + H(+). Dual-specificity methyltransferase that catalyzes the formation of 5-methyluridine at position 54 (m5U54) in all tRNAs, and that of position 341 (m5U341) in tmRNA (transfer-mRNA). This chain is tRNA/tmRNA (uracil-C(5))-methyltransferase, found in Pseudomonas aeruginosa (strain LESB58).